The chain runs to 477 residues: Adenylyl cyclase-associated protein 2 (477 aa).

At Ala2 the chain carries N-acetylalanine. 2 disordered regions span residues 224–261 and 274–323; these read VLSS…PSRS and TKGL…KHAP. The segment covering 230-246 has biased composition (pro residues); the sequence is GLPPPPPPPPPPGPPPL. Ser301 and Ser309 each carry phosphoserine. A compositionally biased stretch (low complexity) spans 301–320; sequence SPTKSHTPSPTSPKSYPSQK. A C-CAP/cofactor C-like domain is found at 317–455; that stretch reads PSQKHAPVLE…QDGDYREFPI (139 aa).

The protein belongs to the CAP family.

Its subcellular location is the cell membrane. Its function is as follows. Involved in the regulation of actin polymerization. This chain is Adenylyl cyclase-associated protein 2 (CAP2), found in Pongo abelii (Sumatran orangutan).